The following is a 1060-amino-acid chain: Carbamoyl phosphate synthase large chain (1060 aa).

The carboxyphosphate synthetic domain stretch occupies residues 1 to 401; that stretch reads MPKRQDIHKI…SLLKAVRSLE (401 aa). ATP contacts are provided by arginine 129, arginine 169, glycine 175, glycine 176, arginine 208, isoleucine 210, glutamate 215, glycine 241, valine 242, histidine 243, glutamine 284, and glutamate 298. The ATP-grasp 1 domain occupies 133–327; that stretch reads KNLMQKLHEP…IAKMAAKIAV (195 aa). Residues glutamine 284, glutamate 298, and asparagine 300 each contribute to the Mg(2+) site. Residues glutamine 284, glutamate 298, and asparagine 300 each coordinate Mn(2+). Residues 402–546 form an oligomerization domain region; it reads VGLIHPERPA…YSTYESSTES (145 aa). A carbamoyl phosphate synthetic domain region spans residues 547 to 929; that stretch reads VKSDKPSVLV…ALYKAFEAAG (383 aa). One can recognise an ATP-grasp 2 domain in the interval 671–861; that stretch reads DQVIKSLKLP…LAQVATLAIL (191 aa). Residues arginine 707, histidine 746, leucine 748, glutamate 752, glycine 777, isoleucine 778, histidine 779, serine 780, glutamine 820, and glutamate 832 each coordinate ATP. Glutamine 820, glutamate 832, and asparagine 834 together coordinate Mg(2+). Positions 820, 832, and 834 each coordinate Mn(2+). Residues 930–1060 enclose the MGS-like domain; sequence MHLPQFGRAL…QAFSISPIKS (131 aa). Residues 930–1060 are allosteric domain; that stretch reads MHLPQFGRAL…QAFSISPIKS (131 aa).

Belongs to the CarB family. In terms of assembly, composed of two chains; the small (or glutamine) chain promotes the hydrolysis of glutamine to ammonia, which is used by the large (or ammonia) chain to synthesize carbamoyl phosphate. Tetramer of heterodimers (alpha,beta)4. It depends on Mg(2+) as a cofactor. The cofactor is Mn(2+).

It catalyses the reaction hydrogencarbonate + L-glutamine + 2 ATP + H2O = carbamoyl phosphate + L-glutamate + 2 ADP + phosphate + 2 H(+). It carries out the reaction hydrogencarbonate + NH4(+) + 2 ATP = carbamoyl phosphate + 2 ADP + phosphate + 2 H(+). Its pathway is amino-acid biosynthesis; L-arginine biosynthesis; carbamoyl phosphate from bicarbonate: step 1/1. It functions in the pathway pyrimidine metabolism; UMP biosynthesis via de novo pathway; (S)-dihydroorotate from bicarbonate: step 1/3. Large subunit of the glutamine-dependent carbamoyl phosphate synthetase (CPSase). CPSase catalyzes the formation of carbamoyl phosphate from the ammonia moiety of glutamine, carbonate, and phosphate donated by ATP, constituting the first step of 2 biosynthetic pathways, one leading to arginine and/or urea and the other to pyrimidine nucleotides. The large subunit (synthetase) binds the substrates ammonia (free or transferred from glutamine from the small subunit), hydrogencarbonate and ATP and carries out an ATP-coupled ligase reaction, activating hydrogencarbonate by forming carboxy phosphate which reacts with ammonia to form carbamoyl phosphate. This Lacticaseibacillus casei (strain BL23) (Lactobacillus casei) protein is Carbamoyl phosphate synthase large chain.